We begin with the raw amino-acid sequence, 379 residues long: Gonadotropin-releasing hormone II receptor (379 aa).

At 1-45 (MSGNTTLLLSNPTNVLDNSSVLNVSVSPPVLKWETPTFTTAARFR) the chain is on the extracellular side. Residues N4, N18, and N23 are each glycosylated (N-linked (GlcNAc...) asparagine). Residues 46–65 (VAATLVLFVFAAASNLSVLL) form a helical membrane-spanning segment. The Cytoplasmic segment spans residues 66–80 (SVTRGRGRRLASHLR). The helical transmembrane segment at 81–100 (PLIASLASADLVMTFVVMPL) threads the bilayer. Topologically, residues 101 to 118 (DAVWNVTVQWYAGDAMCK) are extracellular. N-linked (GlcNAc...) asparagine glycosylation occurs at N105. The cysteines at positions 117 and 194 are disulfide-linked. A helical transmembrane segment spans residues 119–140 (LMCFLKLFAMHSAAFILVVVSL). The Cytoplasmic portion of the chain corresponds to 141-167 (DRHHAILHPLDTLDAGRRNRRMLLTAW). The chain crosses the membrane as a helical span at residues 168–184 (ILSLLLASPQLFIFRAI). At 185-210 (KAKGVDFVQCATHGSFQQHWQETAYN) the chain is on the extracellular side. A helical transmembrane segment spans residues 211–230 (MFHFVTLYVFPLLVMSLCYT). The Cytoplasmic segment spans residues 231 to 283 (RILVEINRQMHRSKDKAGEPCLRRSGTDMIPKARMKTLKMTIIIVASFVICWT). Residues 284 to 302 (PYYLLGIWYWFQPQMLHVI) form a helical membrane-spanning segment. Over 303–308 (PDYVHH) the chain is Extracellular. The chain crosses the membrane as a helical span at residues 309–328 (VFFVFGNLNTCCDPVIYGFF). Over 329-379 (TPSFRADLSRCFCWRNQNASAKSLPHFSGHRREVSGEAESDLGSGDQPSGQ) the chain is Cytoplasmic. The disordered stretch occupies residues 355–379 (FSGHRREVSGEAESDLGSGDQPSGQ).

This sequence belongs to the G-protein coupled receptor 1 family. Post-translationally, phosphorylated on the C-terminal cytoplasmic tail.

The protein resides in the cell membrane. Receptor for gonadotropin releasing hormone II (GnRH II). This receptor mediates its action by association with G proteins that activate a phosphatidylinositol-calcium second messenger system. In Clarias gariepinus (North African catfish), this protein is Gonadotropin-releasing hormone II receptor.